A 162-amino-acid chain; its full sequence is Transcription elongation factor GreB (162 aa).

The stretch at 52–73 forms a coiled coil; that stretch reads KKLLREIDRRVRYLRKRLEDVK.

It belongs to the GreA/GreB family. GreB subfamily.

In terms of biological role, necessary for efficient RNA polymerase transcription elongation past template-encoded arresting sites. The arresting sites in DNA have the property of trapping a certain fraction of elongating RNA polymerases that pass through, resulting in locked ternary complexes. Cleavage of the nascent transcript by cleavage factors such as GreA or GreB allows the resumption of elongation from the new 3'terminus. GreB releases sequences of up to 9 nucleotides in length. In Pseudomonas putida (strain ATCC 47054 / DSM 6125 / CFBP 8728 / NCIMB 11950 / KT2440), this protein is Transcription elongation factor GreB.